The sequence spans 241 residues: Probable transcriptional regulator PhnF (241 aa).

The HTH gntR-type domain maps to 11 to 78 (PTRYQEIAAK…QGVGVLVLMR (68 aa)). The H-T-H motif DNA-binding region spans 38-57 (EQQLAARFEVNRHTLRRAID).

In terms of biological role, belongs to an operon involved in alkylphosphonate uptake and C-P lyase. Exact function not known. By similarity could be a transcriptional regulator. This chain is Probable transcriptional regulator PhnF (phnF), found in Escherichia coli (strain K12).